A 524-amino-acid chain; its full sequence is GMP synthase [glutamine-hydrolyzing] (524 aa).

Residues Arg9–Asn207 enclose the Glutamine amidotransferase type-1 domain. Residue Cys86 is the Nucleophile of the active site. Active-site residues include His181 and Glu183. Residues Trp208–Arg399 enclose the GMPS ATP-PPase domain. Residue Ser235 to Ala241 coordinates ATP.

In terms of assembly, homodimer.

The catalysed reaction is XMP + L-glutamine + ATP + H2O = GMP + L-glutamate + AMP + diphosphate + 2 H(+). It participates in purine metabolism; GMP biosynthesis; GMP from XMP (L-Gln route): step 1/1. Its function is as follows. Catalyzes the synthesis of GMP from XMP. The protein is GMP synthase [glutamine-hydrolyzing] of Coxiella burnetii (strain CbuK_Q154) (Coxiella burnetii (strain Q154)).